A 310-amino-acid chain; its full sequence is Cytochrome f (310 aa).

A signal peptide spans 1–26 (MNIKLTLLVLISIINLMIIQPIQTLA). 4 residues coordinate heme: Phe-27, Cys-47, Cys-50, and His-51. Residues 276-296 (IKGMIVFFFTVTIAQIFFVLK) form a helical membrane-spanning segment.

Belongs to the cytochrome f family. As to quaternary structure, the 4 large subunits of the cytochrome b6-f complex are cytochrome b6, subunit IV (17 kDa polypeptide, petD), cytochrome f and the Rieske protein, while the 4 small subunits are PetG, PetL, PetM and PetN. The complex functions as a dimer. It depends on heme as a cofactor.

Its subcellular location is the plastid. The protein resides in the chloroplast thylakoid membrane. Component of the cytochrome b6-f complex, which mediates electron transfer between photosystem II (PSII) and photosystem I (PSI), cyclic electron flow around PSI, and state transitions. This is Cytochrome f from Gracilaria tenuistipitata var. liui (Red alga).